Consider the following 146-residue polypeptide: Putative pre-16S rRNA nuclease (146 aa).

This sequence belongs to the YqgF nuclease family.

It is found in the cytoplasm. Could be a nuclease involved in processing of the 5'-end of pre-16S rRNA. This chain is Putative pre-16S rRNA nuclease, found in Mycoplasmopsis pulmonis (strain UAB CTIP) (Mycoplasma pulmonis).